Reading from the N-terminus, the 209-residue chain is Kynurenine formamidase (209 aa).

Trp-20 contacts substrate. 3 residues coordinate Zn(2+): His-50, His-54, and Asp-56. The Proton donor/acceptor role is filled by His-60. Positions 161 and 173 each coordinate Zn(2+).

This sequence belongs to the Cyclase 1 superfamily. KynB family. In terms of assembly, homodimer. Zn(2+) serves as cofactor.

It catalyses the reaction N-formyl-L-kynurenine + H2O = L-kynurenine + formate + H(+). Its pathway is amino-acid degradation; L-tryptophan degradation via kynurenine pathway; L-kynurenine from L-tryptophan: step 2/2. Catalyzes the hydrolysis of N-formyl-L-kynurenine to L-kynurenine, the second step in the kynurenine pathway of tryptophan degradation. This chain is Kynurenine formamidase, found in Bacillus cytotoxicus (strain DSM 22905 / CIP 110041 / 391-98 / NVH 391-98).